The following is a 397-amino-acid chain: MQKKSLSDIAIQGKRVLMRVDFNVPLDSNKKITDDKRIIESLPSIKKVLENGGRLILMSHLGRPKGKVNADYSLAPVATRLAELLDCPVTMAKECIGTETMQQVLALQDGEVILLENLRFHPEEEANDPDFARELASLGEVYVNDAFGTAHRAHASTEGITHYVQTAVAGFLIERELLYLGKALQEPERPFVAILGGSKISGKIDVLENLFKKVDTVLIGGAMVFTFFKAQGYEIGNSLVEESKIELALKILDEAKNKGIKLLLPVDVIVAPEISATADCHSEMITAIPEEMIGVDIGPLTAEIYRNEILSARTVLWNGPMGVFEIDNFAAGTMAVAQAMAEATAEGATTIIGGGDSAAAVAKAGLANEMTHISTGGGASLEFLEGKELPGIAALND.

Substrate is bound by residues 21-23 (DFN), R37, 60-63 (HLGR), R119, and R152. Residues K203, G294, E325, and 354 to 357 (GGDS) each bind ATP.

This sequence belongs to the phosphoglycerate kinase family. In terms of assembly, monomer.

Its subcellular location is the cytoplasm. It catalyses the reaction (2R)-3-phosphoglycerate + ATP = (2R)-3-phospho-glyceroyl phosphate + ADP. The protein operates within carbohydrate degradation; glycolysis; pyruvate from D-glyceraldehyde 3-phosphate: step 2/5. The sequence is that of Phosphoglycerate kinase from Pelodictyon phaeoclathratiforme (strain DSM 5477 / BU-1).